A 273-amino-acid chain; its full sequence is 5-deoxy-glucuronate isomerase (273 aa).

Belongs to the isomerase IolB family.

It carries out the reaction 5-deoxy-D-glucuronate = 5-dehydro-2-deoxy-D-gluconate. It functions in the pathway polyol metabolism; myo-inositol degradation into acetyl-CoA; acetyl-CoA from myo-inositol: step 4/7. Involved in the isomerization of 5-deoxy-glucuronate (5DG) to 5-dehydro-2-deoxy-D-gluconate (DKG or 2-deoxy-5-keto-D-gluconate). This Listeria monocytogenes serotype 4a (strain HCC23) protein is 5-deoxy-glucuronate isomerase.